Reading from the N-terminus, the 501-residue chain is Cytochrome P450 90A3 (501 aa).

A helical transmembrane segment spans residues A2 to L22. Residue C446 coordinates heme.

The protein belongs to the cytochrome P450 family. It depends on heme as a cofactor. In terms of tissue distribution, highly expressed in shoot apex and inflorenscence. Expressed in roots, stems, leaf blades and leaf sheaths.

It is found in the membrane. The protein operates within plant hormone biosynthesis; brassinosteroid biosynthesis. Its function is as follows. Catalyzes the C23-alpha-hydroxylation step in brassinosteroid biosynthesis. Converts 6-deoxocathasterone (6-deoxoCT) to 6-deoxoteasterone (6-deoxoTE) in the late C6-oxidation pathway and cathasterone (CT) to teasterone (TE) in the early C6-oxidation pathway of brassinolide (BL) biosynthesis. The chain is Cytochrome P450 90A3 from Oryza sativa subsp. japonica (Rice).